The sequence spans 394 residues: Probable cytosolic iron-sulfur protein assembly protein 1 (394 aa).

WD repeat units follow at residues 10–49 (AHND…NFPL), 56–108 (AHKR…EQDS), 144–184 (GHEN…EEFE), 191–230 (DHQH…DDWS), 237–284 (GHGG…TEQI), 313–352 (IHKY…KWEI), and 359–394 (AHGV…IWEP).

It belongs to the WD repeat CIA1 family. As to quaternary structure, interacts with NAR1.

The protein localises to the cytoplasm. The protein resides in the nucleus. In terms of biological role, essential component of the cytosolic iron-sulfur (Fe/S) protein assembly machinery. Required for the maturation of extramitochondrial Fe/S proteins. The chain is Probable cytosolic iron-sulfur protein assembly protein 1 from Debaryomyces hansenii (strain ATCC 36239 / CBS 767 / BCRC 21394 / JCM 1990 / NBRC 0083 / IGC 2968) (Yeast).